Here is a 624-residue protein sequence, read N- to C-terminus: Probable Xaa-Pro aminopeptidase P (624 aa).

The Mn(2+) site is built by D414, D425, E530, and E544.

This sequence belongs to the peptidase M24B family. Mn(2+) serves as cofactor.

It carries out the reaction Release of any N-terminal amino acid, including proline, that is linked to proline, even from a dipeptide or tripeptide.. Catalyzes the removal of a penultimate prolyl residue from the N-termini of peptides. In Chaetomium globosum (strain ATCC 6205 / CBS 148.51 / DSM 1962 / NBRC 6347 / NRRL 1970) (Soil fungus), this protein is Probable Xaa-Pro aminopeptidase P (AMPP).